The sequence spans 497 residues: Glucose-6-phosphate 1-dehydrogenase (497 aa).

NADP(+)-binding positions include 15 to 22 (GASGDLSK), R49, and K153. D-glucose 6-phosphate-binding positions include K153, 183-187 (HYLGK), E221, and D240. H245 acts as the Proton acceptor in catalysis. R336 contacts NADP(+). K339 is a binding site for D-glucose 6-phosphate. The NADP(+) site is built by K345, R349, and R371. D-glucose 6-phosphate is bound at residue Q373. NADP(+) contacts are provided by residues 379–381 (YLK), 399–401 (DLT), and R466.

Belongs to the glucose-6-phosphate dehydrogenase family.

It catalyses the reaction D-glucose 6-phosphate + NADP(+) = 6-phospho-D-glucono-1,5-lactone + NADPH + H(+). Its pathway is carbohydrate degradation; pentose phosphate pathway; D-ribulose 5-phosphate from D-glucose 6-phosphate (oxidative stage): step 1/3. Functionally, catalyzes the rate-limiting step of the oxidative pentose-phosphate pathway, which represents a route for the dissimilation of carbohydrates besides glycolysis. The main function of this enzyme is to provide reducing power (NADPH) and pentose phosphates for fatty acid and nucleic acid synthesis. The chain is Glucose-6-phosphate 1-dehydrogenase (ZWF) from Kluyveromyces lactis (strain ATCC 8585 / CBS 2359 / DSM 70799 / NBRC 1267 / NRRL Y-1140 / WM37) (Yeast).